The primary structure comprises 623 residues: Glutathione import ATP-binding protein GsiA (623 aa).

ABC transporter domains follow at residues 15 to 269 (VSGL…QTLL) and 325 to 564 (LRSG…RKLM). ATP is bound by residues 49–56 (GESGSGKS) and 357–364 (GESGSGKS).

The protein belongs to the ABC transporter superfamily. Glutathione importer (TC 3.A.1.5.11) family. In terms of assembly, the complex is composed of two ATP-binding proteins (GsiA), two transmembrane proteins (GsiC and GsiD) and a solute-binding protein (GsiB).

It localises to the cell inner membrane. The enzyme catalyses glutathione(out) + ATP + H2O = glutathione(in) + ADP + phosphate + H(+). Part of the ABC transporter complex GsiABCD involved in glutathione import. Responsible for energy coupling to the transport system. The sequence is that of Glutathione import ATP-binding protein GsiA from Salmonella paratyphi A (strain ATCC 9150 / SARB42).